Reading from the N-terminus, the 339-residue chain is Fructose-1,6-bisphosphatase class 1 (339 aa).

Mg(2+) contacts are provided by glutamate 101, aspartate 120, leucine 122, and aspartate 123. Substrate-binding positions include 123–126 (DGSS), asparagine 215, and lysine 281. Glutamate 287 provides a ligand contact to Mg(2+).

The protein belongs to the FBPase class 1 family. Homotetramer. Mg(2+) is required as a cofactor.

It localises to the cytoplasm. It carries out the reaction beta-D-fructose 1,6-bisphosphate + H2O = beta-D-fructose 6-phosphate + phosphate. It functions in the pathway carbohydrate biosynthesis; gluconeogenesis. The polypeptide is Fructose-1,6-bisphosphatase class 1 (Polynucleobacter necessarius subsp. necessarius (strain STIR1)).